Here is a 118-residue protein sequence, read N- to C-terminus: Beta-elicitin cryptogein (118 aa).

The signal sequence occupies residues 1–20 (MNFTALLAAVAAALVGSANA). 3 cysteine pairs are disulfide-bonded: cysteine 23–cysteine 91, cysteine 47–cysteine 76, and cysteine 71–cysteine 115.

This sequence belongs to the elicitin family.

It is found in the secreted. Induces local and distal defense responses (incompatible hypersensitive reaction) in plants from the solanaceae and cruciferae families. Elicits leaf necrosis and causes the accumulation of pathogenesis-related proteins. Might interact with the lipidic molecules of the plasma membrane. This is Beta-elicitin cryptogein from Phytophthora cryptogea.